A 20-amino-acid chain; its full sequence is Unknown protein NF007 from 2D-PAGE (20 aa).

The chain is Unknown protein NF007 from 2D-PAGE from Naegleria fowleri (Brain eating amoeba).